The chain runs to 103 residues: Small ribosomal subunit protein uS10 (103 aa).

It belongs to the universal ribosomal protein uS10 family. Part of the 30S ribosomal subunit.

Involved in the binding of tRNA to the ribosomes. The protein is Small ribosomal subunit protein uS10 of Borrelia duttonii (strain Ly).